A 596-amino-acid polypeptide reads, in one-letter code: Heat shock factor protein 5 (596 aa).

The DNA-binding element occupies 10–200 (NPNNFPAKLW…FHRSFRRDSL (191 aa)). The tract at residues 541–576 (EMGPASKPSEDTGLATPARYREHRSNSQQGKSPDLH) is disordered. Position 572 is a phosphoserine (S572).

This sequence belongs to the HSF family. As to quaternary structure, homooligomer.

It is found in the nucleus. The protein localises to the chromosome. DNA-binding transcription factor that is essential for male fertility, spermatogenesis and meiotic prophase progression in spermatocytes under non-stress conditions. Positvely and negatively regulates gene expression to ensure progression of meiotic prophase beyond pachytene stage in spermatocytes. Plays a role in male germline meiotic sex chromosome remodeling and silencing through regulation of SMARCA4. The protein is Heat shock factor protein 5 (HSF5) of Homo sapiens (Human).